The chain runs to 76 residues: Protein TraJ (76 aa).

It is found in the cytoplasm. In terms of biological role, this protein is essential for positively regulating the expression of transfer genes that are involved in the conjugal transfer of DNA between bacterial cells. This chain is Protein TraJ (traJ), found in Escherichia coli.